The sequence spans 979 residues: Protein argonaute PNH1 (979 aa).

The disordered stretch occupies residues 1–95 (MLEVLDMAPP…GGRAGAGPGP (95 aa)). The segment covering 54-67 (AETAAATAAVAPPE) has biased composition (low complexity). The segment covering 77 to 86 (GRRRGGRGRG) has biased composition (basic residues). In terms of domain architecture, PAZ spans 333 to 446 (PVIEFVAQIL…LPMEACKIVE (114 aa)). In terms of domain architecture, Piwi spans 620-941 (LLLAILPDNN…AAFRARFYME (322 aa)).

This sequence belongs to the argonaute family. Ago subfamily.

It is found in the cytoplasm. In terms of biological role, probably involved in the RNA silencing pathway. May bind to short RNAs such as microRNAs (miRNAs) or short interfering RNAs (siRNAs), and represses the translation of mRNAs which are complementary to them. Plays a role in the maintenance of the indeterminate state of the stem cells in the shoot apical meristem (SAM). Regulates leaf formation through vascular development and may be involved in determining the central domain of the leaf founder region. The protein is Protein argonaute PNH1 (PHN1) of Oryza sativa subsp. japonica (Rice).